The following is a 152-amino-acid chain: SsrA-binding protein (152 aa).

This sequence belongs to the SmpB family.

It localises to the cytoplasm. Required for rescue of stalled ribosomes mediated by trans-translation. Binds to transfer-messenger RNA (tmRNA), required for stable association of tmRNA with ribosomes. tmRNA and SmpB together mimic tRNA shape, replacing the anticodon stem-loop with SmpB. tmRNA is encoded by the ssrA gene; the 2 termini fold to resemble tRNA(Ala) and it encodes a 'tag peptide', a short internal open reading frame. During trans-translation Ala-aminoacylated tmRNA acts like a tRNA, entering the A-site of stalled ribosomes, displacing the stalled mRNA. The ribosome then switches to translate the ORF on the tmRNA; the nascent peptide is terminated with the 'tag peptide' encoded by the tmRNA and targeted for degradation. The ribosome is freed to recommence translation, which seems to be the essential function of trans-translation. The sequence is that of SsrA-binding protein from Rickettsia rickettsii.